The chain runs to 285 residues: Acetyl-coenzyme A carboxylase carboxyl transferase subunit beta (285 aa).

The 262-residue stretch at 24-285 (GLWYKSPTGK…DLIQNQPVRA (262 aa)) folds into the CoA carboxyltransferase N-terminal domain.

Belongs to the AccD/PCCB family. In terms of assembly, acetyl-CoA carboxylase is a heterohexamer composed of biotin carboxyl carrier protein (AccB), biotin carboxylase (AccC) and two subunits each of ACCase subunit alpha (AccA) and ACCase subunit beta (AccD).

The protein resides in the cytoplasm. The catalysed reaction is N(6)-carboxybiotinyl-L-lysyl-[protein] + acetyl-CoA = N(6)-biotinyl-L-lysyl-[protein] + malonyl-CoA. Its pathway is lipid metabolism; malonyl-CoA biosynthesis; malonyl-CoA from acetyl-CoA: step 1/1. In terms of biological role, component of the acetyl coenzyme A carboxylase (ACC) complex. Biotin carboxylase (BC) catalyzes the carboxylation of biotin on its carrier protein (BCCP) and then the CO(2) group is transferred by the transcarboxylase to acetyl-CoA to form malonyl-CoA. This Christiangramia forsetii (strain DSM 17595 / CGMCC 1.15422 / KT0803) (Gramella forsetii) protein is Acetyl-coenzyme A carboxylase carboxyl transferase subunit beta.